An 85-amino-acid chain; its full sequence is Large ribosomal subunit protein bL31B (85 aa).

Belongs to the bacterial ribosomal protein bL31 family. Type B subfamily. As to quaternary structure, part of the 50S ribosomal subunit.

The protein is Large ribosomal subunit protein bL31B of Clavibacter sepedonicus (Clavibacter michiganensis subsp. sepedonicus).